The sequence spans 286 residues: D-tagatose-1,6-bisphosphate aldolase subunit KbaY (286 aa).

The active-site Proton donor is the D82. Zn(2+) contacts are provided by H83 and H180. G181 is a binding site for dihydroxyacetone phosphate. H208 contacts Zn(2+). Dihydroxyacetone phosphate contacts are provided by residues 209–211 (GAS) and 230–233 (NVAT).

The protein belongs to the class II fructose-bisphosphate aldolase family. TagBP aldolase KbaY subfamily. As to quaternary structure, homotetramer. Forms a complex with KbaZ. The cofactor is Zn(2+).

It catalyses the reaction D-tagatofuranose 1,6-bisphosphate = D-glyceraldehyde 3-phosphate + dihydroxyacetone phosphate. It functions in the pathway carbohydrate metabolism; D-tagatose 6-phosphate degradation; D-glyceraldehyde 3-phosphate and glycerone phosphate from D-tagatose 6-phosphate: step 2/2. In terms of biological role, catalytic subunit of the tagatose-1,6-bisphosphate aldolase KbaYZ, which catalyzes the reversible aldol condensation of dihydroxyacetone phosphate (DHAP or glycerone-phosphate) with glyceraldehyde 3-phosphate (G3P) to produce tagatose 1,6-bisphosphate (TBP). Requires KbaZ subunit for full activity and stability. The chain is D-tagatose-1,6-bisphosphate aldolase subunit KbaY from Escherichia coli O7:K1 (strain IAI39 / ExPEC).